A 101-amino-acid polypeptide reads, in one-letter code: Small ribosomal subunit protein uS14 (101 aa).

This sequence belongs to the universal ribosomal protein uS14 family. Part of the 30S ribosomal subunit. Contacts proteins S3 and S10.

Functionally, binds 16S rRNA, required for the assembly of 30S particles and may also be responsible for determining the conformation of the 16S rRNA at the A site. This chain is Small ribosomal subunit protein uS14, found in Cronobacter sakazakii (strain ATCC BAA-894) (Enterobacter sakazakii).